A 1099-amino-acid polypeptide reads, in one-letter code: 1-phosphatidylinositol 4,5-bisphosphate phosphodiesterase 1 (1099 aa).

Over residues 1 to 10 (MLESLNRRNS) the composition is skewed to basic and acidic residues. Disordered regions lie at residues 1 to 109 (MLES…SSTT) and 128 to 164 (ESRS…KSIQ). Low complexity-rich tracts occupy residues 43-66 (PPKS…KSDL) and 86-109 (PKQQ…SSTT). Residues 131–141 (SIVSNNGGSPM) are compositionally biased toward polar residues. The segment covering 142–155 (SDSTTVTSTLSTDT) has biased composition (low complexity). Positions 566 to 726 (YDYPLNEYFI…LKHKFIIKVK (161 aa)) constitute a PI-PLC X-box domain. Residues His-579 and His-642 contribute to the active site. Positions 724 and 726 each coordinate substrate. The interval 742-780 (FTTSTTTTTTTTTTTTTATSLSEDNENNKSNSSSTSSFI) is disordered. The segment covering 743 to 778 (TTSTTTTTTTTTTTTTATSLSEDNENNKSNSSSTSS) has biased composition (low complexity). Residues 794–912 (ELSNLGIYTQ…GYVLKPSVLR (119 aa)) form the PI-PLC Y-box domain. Residues Ser-823 and Arg-852 each coordinate substrate. The region spanning 917–1071 (KSSSSNVDTR…QGYRYIYLND (155 aa)) is the C2 domain.

It catalyses the reaction a 1,2-diacyl-sn-glycero-3-phospho-(1D-myo-inositol-4,5-bisphosphate) + H2O = 1D-myo-inositol 1,4,5-trisphosphate + a 1,2-diacyl-sn-glycerol + H(+). The production of the second messenger molecules diacylglycerol (DAG) and inositol 1,4,5-trisphosphate (IP3) is mediated by activated phosphatidylinositol-specific phospholipase C enzymes. The polypeptide is 1-phosphatidylinositol 4,5-bisphosphate phosphodiesterase 1 (PLC1) (Candida albicans (Yeast)).